Here is a 418-residue protein sequence, read N- to C-terminus: MATKNSPSPKPMGTAQGDPGEAGTLPAPEAAGIRDTGSTQLKTKPKKIRKIKALVIDLGSQYCKCGYAGEPRPTYFISSTVGKRSAEMAADAGDNFKETYVGHELLNMEASLKLVNPLKHGVVVDWDCIQNIWEYIFHTAMKIMPEEHAVLVSDPPLSPTSNREKYAELLFETFGIPAMHVTSQALLSIYSYGKTSGLVVESGHGVSHVVPISEGDLLPGLPSRVDYAGCDLTNYLMQLLNEAGHKFSDDHLHIIEHIKKKCCYAALLPEEEMSLGLDELHVDYELPDGKIITIGQERFRCSEMLFKPSLVGCTQPGLPELTATCLARCQGTGFKEEMAANVLLCGGCTMLDGFPERFQRELSLLCPGDSPTVAAAPERKTSVWTGGSILASLQAFQQLWVSKEEFEERGCAAIYSKC.

The interval 1-42 (MATKNSPSPKPMGTAQGDPGEAGTLPAPEAAGIRDTGSTQLK) is disordered. Ser-8 carries the post-translational modification Phosphoserine.

This sequence belongs to the actin family. In terms of tissue distribution, testis specific.

The protein localises to the cytoplasm. It localises to the cytoskeleton. In Mus musculus (Mouse), this protein is Actin-like protein 7B (Actl7b).